Reading from the N-terminus, the 203-residue chain is Glycerol-3-phosphate acyltransferase (203 aa).

Helical transmembrane passes span 4–24 (LVLLIIIGAYLLGSISSAVLI), 80–100 (PFLLGIIGIAACLGHIYPIFF), 116–136 (APIGWDLSGMLIGTWLLTVFI), and 138–158 (GYSSLGSLITALAAPLLTWFV).

The protein belongs to the PlsY family. As to quaternary structure, probably interacts with PlsX.

It localises to the cell inner membrane. The enzyme catalyses an acyl phosphate + sn-glycerol 3-phosphate = a 1-acyl-sn-glycero-3-phosphate + phosphate. The protein operates within lipid metabolism; phospholipid metabolism. Catalyzes the transfer of an acyl group from acyl-phosphate (acyl-PO(4)) to glycerol-3-phosphate (G3P) to form lysophosphatidic acid (LPA). This enzyme utilizes acyl-phosphate as fatty acyl donor, but not acyl-CoA or acyl-ACP. This is Glycerol-3-phosphate acyltransferase from Photobacterium profundum (strain SS9).